A 41-amino-acid polypeptide reads, in one-letter code: Inducible serine protease inhibitor 3 (41 aa).

In terms of biological role, inhibits trypsin and the toxin proteases PR1 and PR2 of M.anisopliae. Does not inhibit chymotrypsin, subtilisin Carlsberg, proteinase K and porcine pancreatic elastase. This is Inducible serine protease inhibitor 3 from Galleria mellonella (Greater wax moth).